The sequence spans 163 residues: Ribonuclease H (163 aa).

Residues 4-146 enclose the RNase H type-1 domain; that stretch reads SPKKVLIYTD…CDRLAVRASQ (143 aa). 4 residues coordinate Mg(2+): Asp13, Glu51, Asp73, and Asp138.

This sequence belongs to the RNase H family. As to quaternary structure, monomer. Mg(2+) is required as a cofactor.

The protein localises to the cytoplasm. It carries out the reaction Endonucleolytic cleavage to 5'-phosphomonoester.. In terms of biological role, endonuclease that specifically degrades the RNA of RNA-DNA hybrids. The chain is Ribonuclease H from Rippkaea orientalis (strain PCC 8801 / RF-1) (Cyanothece sp. (strain PCC 8801)).